A 230-amino-acid polypeptide reads, in one-letter code: Triggering receptor expressed on myeloid cells 1 (230 aa).

The N-terminal stretch at 1 to 20 (MRKAGLWGLLCVFFVSEVKA) is a signal peptide. Residues 21–124 (AIVLEEERYD…IYHPPNDPVV (104 aa)) enclose the Ig-like V-type domain. Residues 21 to 202 (AIVLEEERYD…TDADSVSTSS (182 aa)) are Extracellular-facing. Cysteine 41 and cysteine 113 form a disulfide bridge. An N-linked (GlcNAc...) asparagine glycan is attached at asparagine 191. Residues 203-223 (VTISVICGLLSKSLVFIILFI) traverse the membrane as a helical segment. The Cytoplasmic portion of the chain corresponds to 224–230 (VTKRTFG).

As to quaternary structure, monomer. Homomultimer; when activated. Interacts with TYROBP/DAP12. Interacts with TLR4.

The protein resides in the cell membrane. Cell surface receptor that plays important roles in innate and adaptive immunity by amplifying inflammatory responses. Upon activation by various ligands such as PGLYRP1, HMGB1 or HSP70, multimerizes and forms a complex with transmembrane adapter TYROBP/DAP12. In turn, initiates a SYK-mediated cascade of tyrosine phosphorylation, activating multiple downstream mediators such as BTK, MAPK1, MAPK3 or phospholipase C-gamma. This cascade promotes the neutrophil- and macrophage-mediated release of pro-inflammatory cytokines and/or chemokines, as well as their migration and thereby amplifies inflammatory responses that are triggered by bacterial and fungal infections. By also promoting the amplification of inflammatory signals that are initially triggered by Toll-like receptor (TLR) and NOD-like receptor engagement, plays a major role in the pathophysiology of acute and chronic inflammatory diseases of different etiologies including septic shock and atherosclerosis. The sequence is that of Triggering receptor expressed on myeloid cells 1 (Trem1) from Mus musculus (Mouse).